A 560-amino-acid polypeptide reads, in one-letter code: Oxygen-dependent choline dehydrogenase (560 aa).

6–35 (DYIIIGGGSAGSVLGGRLSEDVSNNVLVLE) provides a ligand contact to FAD. Residue His472 is the Proton acceptor of the active site.

This sequence belongs to the GMC oxidoreductase family. Requires FAD as cofactor.

It catalyses the reaction choline + A = betaine aldehyde + AH2. The enzyme catalyses betaine aldehyde + NAD(+) + H2O = glycine betaine + NADH + 2 H(+). The protein operates within amine and polyamine biosynthesis; betaine biosynthesis via choline pathway; betaine aldehyde from choline (cytochrome c reductase route): step 1/1. Its function is as follows. Involved in the biosynthesis of the osmoprotectant glycine betaine. Catalyzes the oxidation of choline to betaine aldehyde and betaine aldehyde to glycine betaine at the same rate. The polypeptide is Oxygen-dependent choline dehydrogenase (Staphylococcus xylosus).